Here is a 378-residue protein sequence, read N- to C-terminus: Heat-inducible transcription repressor HrcA (378 aa).

It belongs to the HrcA family.

In terms of biological role, negative regulator of class I heat shock genes (grpE-dnaK-dnaJ and groELS operons). Prevents heat-shock induction of these operons. This Synechocystis sp. (strain ATCC 27184 / PCC 6803 / Kazusa) protein is Heat-inducible transcription repressor HrcA.